Reading from the N-terminus, the 387-residue chain is Dual specificity protein phosphatase MPK-4 (387 aa).

A compositionally biased stretch (polar residues) spans Met1–Ser15. The disordered stretch occupies residues Met1–Leu27. A Tyrosine-protein phosphatase domain is found at Gly35 to Lys182. Catalysis depends on Cys126, which acts as the Phosphocysteine intermediate. Positions Leu248 to Glu267 are disordered.

This sequence belongs to the protein-tyrosine phosphatase family. Non-receptor class dual specificity subfamily. Interacts (via tyrosine-protein phosphatase domain) with bsk/JNK; the interaction dephosphorylates bsk.

It is found in the nucleus. It localises to the cytoplasm. The catalysed reaction is O-phospho-L-tyrosyl-[protein] + H2O = L-tyrosyl-[protein] + phosphate. The enzyme catalyses O-phospho-L-seryl-[protein] + H2O = L-seryl-[protein] + phosphate. It catalyses the reaction O-phospho-L-threonyl-[protein] + H2O = L-threonyl-[protein] + phosphate. Its activity is regulated as follows. Inhibited by the tyrosine phosphatase inhibitor sodium vanadate. Dual specificity phosphatase; can dephosphorylate both phosphotyrosine and phosphoserine or phosphothreonine residues. May suppress bsk/JNK activation during the immune response. This Drosophila melanogaster (Fruit fly) protein is Dual specificity protein phosphatase MPK-4.